Reading from the N-terminus, the 462-residue chain is Cytokine-like nuclear factor N-PAC (462 aa).

Residues 8–66 enclose the PWWP domain; that stretch reads IGDLVWGKLGRYPPWPGKVVSPPKDLKKPRGKKCFFVKFFGTEDHAWIKVEQLKPYHPH. Residues 91–111 show a composition bias toward basic and acidic residues; that stretch reads KKAKGKDQSHSDDKSKSDKGR. Positions 91–139 are disordered; that stretch reads KKAKGKDQSHSDDKSKSDKGRKAAKPMKIIEEDDEDAFKGGSSDKPASS. Residues 169-462 are dehydrogenase domain; the sequence is GSITPTDKRI…MSAVYRAYIH (294 aa). Residues 179 to 193, threonine 270, and lysine 414 contribute to the NAD(+) site; that span reads GFLG…VVSN.

The protein belongs to the HIBADH-related family. NP60 subfamily. Homotetramere. Binds to mononucleosomes.

It localises to the nucleus. The protein localises to the chromosome. May have oxidoreductase activity. Regulates p38 MAP kinase activity by mediating stress activation of mapk14 and specifically regulating mapk14 signaling. Functionally, cytokine-like nuclear factor with chromatin gene reader activity involved in chromatin modification and regulation of gene expression. Acts as a nucleosome-destabilizing factor that is recruited to genes during transcriptional activation. Recognizes and binds histone H3 without a preference for specific epigenetic markers and also binds DNA. Interacts with KDM1B and promotes its histone demethylase activity by facilitating the capture of H3 tails, they form a multifunctional enzyme complex that modifies transcribed chromatin and facilitates Pol II transcription through nucleosomes. The sequence is that of Cytokine-like nuclear factor N-PAC (glyr1) from Danio rerio (Zebrafish).